The primary structure comprises 554 residues: Zinc finger protein syd-9 (554 aa).

3 C2H2-type zinc fingers span residues 20 to 43, 65 to 87, and 93 to 116; these read LTCP…QMFH, FICE…RSVH, and YVCK…LKHH. Disordered regions lie at residues 136-158, 298-319, and 342-383; these read KIVT…TATP, SPDT…PPMA, and ASGQ…CPSP. Low complexity predominate over residues 142–158; sequence NGPTTNGSTPTTSTATP. Composition is skewed to polar residues over residues 351–360 and 370–379; these read PDSTDTQKGC and SDPSTSSGDS. The segment at 387-410 adopts a C2H2-type 4 zinc-finger fold; sequence LHCKECGTLVRKSSHLPIHMTMSH. The interval 516–554 is disordered; sequence RMEMSLSPIKPFQQRFSRERSSSSSVERSPSRERSRSPL. A compositionally biased stretch (basic and acidic residues) spans 544–554; that stretch reads SPSRERSRSPL.

As to expression, expressed mainly in body wall muscles and ventral cord motoneurons.

The protein localises to the nucleus. It localises to the nucleus speckle. Its function is as follows. Plays a role in regulating synaptic function, probably by modulation of endocytosis. May be dispensable in muscle for normal locomotion. May be involved in post-transcriptional mRNA processing, in parallel with unc-75. The sequence is that of Zinc finger protein syd-9 from Caenorhabditis elegans.